The primary structure comprises 732 residues: 1,4-alpha-glucan branching enzyme GlgB (732 aa).

Aspartate 408 functions as the Nucleophile in the catalytic mechanism. Glutamate 461 (proton donor) is an active-site residue.

It belongs to the glycosyl hydrolase 13 family. GlgB subfamily. Monomer.

The enzyme catalyses Transfers a segment of a (1-&gt;4)-alpha-D-glucan chain to a primary hydroxy group in a similar glucan chain.. It participates in glycan biosynthesis; glycogen biosynthesis. Its function is as follows. Catalyzes the formation of the alpha-1,6-glucosidic linkages in glycogen by scission of a 1,4-alpha-linked oligosaccharide from growing alpha-1,4-glucan chains and the subsequent attachment of the oligosaccharide to the alpha-1,6 position. The sequence is that of 1,4-alpha-glucan branching enzyme GlgB from Rhodococcus jostii (strain RHA1).